Here is a 448-residue protein sequence, read N- to C-terminus: SVP1-like protein 2 (448 aa).

N-linked (GlcNAc...) asparagine glycans are attached at residues N61, N155, N256, N280, N315, and N421. WD repeat units lie at residues 222 to 262 (AHKN…LIKE) and 267 to 306 (VDKADIYEMSFSPNGSKLAVLSNKQTLHIFQIFETTNTET). Residues 416 to 435 (THYSLNESLRNEDTKSAGEP) are disordered. The segment covering 424–435 (LRNEDTKSAGEP) has biased composition (basic and acidic residues).

It belongs to the WD repeat PROPPIN family. N-glycosylated.

Its subcellular location is the endosome membrane. The protein resides in the prevacuolar compartment membrane. In terms of biological role, involved in piecemeal microautophagy of the nucleus (micronucleophagy). This Saccharomyces cerevisiae (strain ATCC 204508 / S288c) (Baker's yeast) protein is SVP1-like protein 2 (HSV2).